A 78-amino-acid chain; its full sequence is DNA-directed RNA polymerase subunit Rpo5 (78 aa).

The protein belongs to the archaeal Rpo5/eukaryotic RPB5 RNA polymerase subunit family. Part of the RNA polymerase complex.

The protein localises to the cytoplasm. It carries out the reaction RNA(n) + a ribonucleoside 5'-triphosphate = RNA(n+1) + diphosphate. DNA-dependent RNA polymerase (RNAP) catalyzes the transcription of DNA into RNA using the four ribonucleoside triphosphates as substrates. The polypeptide is DNA-directed RNA polymerase subunit Rpo5 (Methanococcoides burtonii (strain DSM 6242 / NBRC 107633 / OCM 468 / ACE-M)).